Here is a 316-residue protein sequence, read N- to C-terminus: Pantothenate kinase (316 aa).

95–102 (GSVAVGKS) contacts ATP.

It belongs to the prokaryotic pantothenate kinase family.

It is found in the cytoplasm. The catalysed reaction is (R)-pantothenate + ATP = (R)-4'-phosphopantothenate + ADP + H(+). The protein operates within cofactor biosynthesis; coenzyme A biosynthesis; CoA from (R)-pantothenate: step 1/5. The protein is Pantothenate kinase of Shigella dysenteriae serotype 1 (strain Sd197).